A 703-amino-acid chain; its full sequence is Probable ATP-dependent RNA helicase DHX35 (703 aa).

Residues 64-229 (LYLIENYQTV…FNQNETSDPA (166 aa)) enclose the Helicase ATP-binding domain. An ATP-binding site is contributed by 77-84 (GETGCGKS). Positions 176 to 179 (DEAH) match the DEAH box motif. Residues 261–438 (TVETVVKIHQ…PVILQLKALG (178 aa)) form the Helicase C-terminal domain.

This sequence belongs to the DEAD box helicase family. DEAH subfamily. As to quaternary structure, identified in the spliceosome C complex.

It carries out the reaction ATP + H2O = ADP + phosphate + H(+). Functionally, may be involved in pre-mRNA splicing. The sequence is that of Probable ATP-dependent RNA helicase DHX35 (DHX35) from Homo sapiens (Human).